We begin with the raw amino-acid sequence, 559 residues long: Cellulose biosynthesis protein BcsG (559 aa).

The next 4 membrane-spanning stretches (helical) occupy residues 34 to 54 (LLWAGYLNFHPLLNLVFMAFL), 68 to 88 (HWIAIPVGFALFWHDTWLPGP), 113 to 133 (FINWQMIGAIFVLLVAWLFLS), and 139 to 159 (TVFVVAIMVWLNVLTLTGPVF).

The protein localises to the cell membrane. Its function is as follows. Required for cellulose biosynthesis. The sequence is that of Cellulose biosynthesis protein BcsG (bcsG) from Salmonella typhimurium (strain LT2 / SGSC1412 / ATCC 700720).